A 126-amino-acid polypeptide reads, in one-letter code: Large ribosomal subunit protein uL22 (126 aa).

It belongs to the universal ribosomal protein uL22 family. As to quaternary structure, part of the 50S ribosomal subunit.

Functionally, this protein binds specifically to 23S rRNA; its binding is stimulated by other ribosomal proteins, e.g. L4, L17, and L20. It is important during the early stages of 50S assembly. It makes multiple contacts with different domains of the 23S rRNA in the assembled 50S subunit and ribosome. In terms of biological role, the globular domain of the protein is located near the polypeptide exit tunnel on the outside of the subunit, while an extended beta-hairpin is found that lines the wall of the exit tunnel in the center of the 70S ribosome. This Bradyrhizobium sp. (strain BTAi1 / ATCC BAA-1182) protein is Large ribosomal subunit protein uL22.